Reading from the N-terminus, the 553-residue chain is Dihydroxy-acid dehydratase (553 aa).

Aspartate 78 is a binding site for Mg(2+). Cysteine 119 provides a ligand contact to [2Fe-2S] cluster. Residues aspartate 120 and lysine 121 each contribute to the Mg(2+) site. Lysine 121 carries the post-translational modification N6-carboxylysine. A [2Fe-2S] cluster-binding site is contributed by cysteine 191. A Mg(2+)-binding site is contributed by glutamate 442. Serine 468 serves as the catalytic Proton acceptor.

Belongs to the IlvD/Edd family. As to quaternary structure, homodimer. Requires [2Fe-2S] cluster as cofactor. It depends on Mg(2+) as a cofactor.

The enzyme catalyses (2R)-2,3-dihydroxy-3-methylbutanoate = 3-methyl-2-oxobutanoate + H2O. It carries out the reaction (2R,3R)-2,3-dihydroxy-3-methylpentanoate = (S)-3-methyl-2-oxopentanoate + H2O. It functions in the pathway amino-acid biosynthesis; L-isoleucine biosynthesis; L-isoleucine from 2-oxobutanoate: step 3/4. Its pathway is amino-acid biosynthesis; L-valine biosynthesis; L-valine from pyruvate: step 3/4. In terms of biological role, functions in the biosynthesis of branched-chain amino acids. Catalyzes the dehydration of (2R,3R)-2,3-dihydroxy-3-methylpentanoate (2,3-dihydroxy-3-methylvalerate) into 2-oxo-3-methylpentanoate (2-oxo-3-methylvalerate) and of (2R)-2,3-dihydroxy-3-methylbutanoate (2,3-dihydroxyisovalerate) into 2-oxo-3-methylbutanoate (2-oxoisovalerate), the penultimate precursor to L-isoleucine and L-valine, respectively. This Carboxydothermus hydrogenoformans (strain ATCC BAA-161 / DSM 6008 / Z-2901) protein is Dihydroxy-acid dehydratase.